The sequence spans 294 residues: Non-selective voltage-gated ion channel VDAC2 (294 aa).

A2 is modified (N-acetylalanine). Residues K23 and K31 each coordinate ATP. K31 bears the N6-acetyllysine; alternate mark. At K31 the chain carries N6-succinyllysine; alternate. Residue K31 forms a Glycyl lysine isopeptide (Lys-Gly) (interchain with G-Cter in ubiquitin); alternate linkage. 2 consecutive transmembrane segments (beta stranded) span residues 37–46 (LVKLDVKTKS) and 50–58 (VEFSTSGSS). A Glycyl lysine isopeptide (Lys-Gly) (interchain with G-Cter in ubiquitin) cross-link involves residue K64. Residues 65–75 (VTGTLETKYKW) form a beta stranded membrane-spanning segment. Y78 carries the phosphotyrosine modification. A run of 3 beta stranded transmembrane segments spans residues 80–87 (LTFTEKWN), 91–100 (TLGTEIAIED), and 106–115 (LKLTFDTTFS). The residue at position 118 (T118) is a Phosphothreonine. Residue K120 is modified to N6-acetyllysine; alternate. K120 is covalently cross-linked (Glycyl lysine isopeptide (Lys-Gly) (interchain with G-Cter in ubiquitin); alternate). K121 participates in a covalent cross-link: Glycyl lysine isopeptide (Lys-Gly) (interchain with G-Cter in ubiquitin). The next 4 membrane-spanning stretches (beta stranded) occupy residues 122–131 (SGKIKSSYKR), 134–141 (INLGCDVD), 148–156 (AIHGSAVFG), and 161–169 (LAGYQMTFD). Residue K172 forms a Glycyl lysine isopeptide (Lys-Gly) (interchain with G-Cter in ubiquitin) linkage. Transmembrane regions (beta stranded) follow at residues 174-186 (KLTR…GYRT), 189-196 (FQLHTNVN), 200-209 (EFGGSIYQKV), 213-222 (LDTSVNLAWT), 229-238 (RFGIAAKYQL), and 242-249 (ASISAKVN). S251 carries the phosphoserine modification. Residues 253-255 (LIG) and 271-275 (SALVD) each bind NAD(+). A run of 2 beta stranded transmembrane segments spans residues 253–262 (LIGVGYTQTL) and 265–274 (GVKLTLSALV). K277 carries the N6-acetyllysine; alternate modification. K277 participates in a covalent cross-link: Glycyl lysine isopeptide (Lys-Gly) (interchain with G-Cter in ubiquitin); alternate. The beta stranded transmembrane segment at 284 to 293 (HKLGLALELE) threads the bilayer.

It belongs to the eukaryotic mitochondrial porin family. As to quaternary structure, monomer, homodimer and higher order oligomers; formation of higher order structures is necessary for scramblase activity. Interacts with ARMC12 in a TBC1D21-dependent manner. Interacts with KLC3. Interacts with SPATA33. Interacts with PPP3CC in a SPATA33-dependent manner. Post-translationally, ubiquitinated by PRKN during mitophagy, leading to its degradation and enhancement of mitophagy. Deubiquitinated by USP30.

It is found in the mitochondrion outer membrane. The protein resides in the membrane. The enzyme catalyses chloride(in) = chloride(out). The catalysed reaction is K(+)(in) = K(+)(out). It carries out the reaction a 1,2-diacyl-sn-glycero-3-phospho-L-serine(in) = a 1,2-diacyl-sn-glycero-3-phospho-L-serine(out). It catalyses the reaction a 1,2-diacyl-sn-glycero-3-phosphocholine(in) = a 1,2-diacyl-sn-glycero-3-phosphocholine(out). The enzyme catalyses a 1,2-diacyl-sn-glycero-3-phospho-(1D-myo-inositol)(in) = a 1,2-diacyl-sn-glycero-3-phospho-(1D-myo-inositol)(out). Its function is as follows. Non-selective voltage-gated ion channel that mediates the transport of anions and cations through the mitochondrion outer membrane and plasma membrane. The channel adopts an open conformation at zero mV and a closed conformation at both positive and negative potentials. There are two populations of channels; the main that functions in a lower open-state conductance with lower ion selectivity, that switch, in a voltage-dependent manner, from the open to a low-conducting 'closed' state and the other that has a normal ion selectivity in the typical high conductance, 'open' state. Binds various lipids, including the sphingolipid ceramide, the phospholipid phosphatidylcholine, and the sterols cholesterol and oxysterol. Binding of ceramide promotes the mitochondrial outer membrane permeabilization (MOMP) apoptotic pathway. Functionally, catalyzes the scrambling of phospholipids across the outer mitochondrial membrane; the mechanism is unrelated to channel activity and is capable of translocating both anionic and zwitterionic phospholipids. The chain is Non-selective voltage-gated ion channel VDAC2 from Oryctolagus cuniculus (Rabbit).